We begin with the raw amino-acid sequence, 206 residues long: Large ribosomal subunit protein uL4 (206 aa).

The tract at residues 45–85 (QGNRAQKDREQVKHTTKKPWRQKGTGRARAGMSSSPLWRGG) is disordered. Basic residues predominate over residues 58–70 (HTTKKPWRQKGTG).

Belongs to the universal ribosomal protein uL4 family. Part of the 50S ribosomal subunit.

In terms of biological role, one of the primary rRNA binding proteins, this protein initially binds near the 5'-end of the 23S rRNA. It is important during the early stages of 50S assembly. It makes multiple contacts with different domains of the 23S rRNA in the assembled 50S subunit and ribosome. Its function is as follows. Forms part of the polypeptide exit tunnel. The protein is Large ribosomal subunit protein uL4 of Burkholderia mallei (strain NCTC 10247).